We begin with the raw amino-acid sequence, 264 residues long: Thymidylate synthase (264 aa).

DUMP is bound at residue Arg21. His51 contacts (6R)-5,10-methylene-5,6,7,8-tetrahydrofolate. Residue 126–127 (RR) participates in dUMP binding. Cys146 (nucleophile) is an active-site residue. DUMP-binding positions include 166 to 169 (RSAD), Asn177, and 207 to 209 (HLY). Asp169 is a (6R)-5,10-methylene-5,6,7,8-tetrahydrofolate binding site. Position 263 (Ala263) interacts with (6R)-5,10-methylene-5,6,7,8-tetrahydrofolate.

Belongs to the thymidylate synthase family. Bacterial-type ThyA subfamily. In terms of assembly, homodimer.

It is found in the cytoplasm. The catalysed reaction is dUMP + (6R)-5,10-methylene-5,6,7,8-tetrahydrofolate = 7,8-dihydrofolate + dTMP. The protein operates within pyrimidine metabolism; dTTP biosynthesis. Functionally, catalyzes the reductive methylation of 2'-deoxyuridine-5'-monophosphate (dUMP) to 2'-deoxythymidine-5'-monophosphate (dTMP) while utilizing 5,10-methylenetetrahydrofolate (mTHF) as the methyl donor and reductant in the reaction, yielding dihydrofolate (DHF) as a by-product. This enzymatic reaction provides an intracellular de novo source of dTMP, an essential precursor for DNA biosynthesis. The chain is Thymidylate synthase from Methylorubrum extorquens (strain CM4 / NCIMB 13688) (Methylobacterium extorquens).